Here is a 597-residue protein sequence, read N- to C-terminus: MSNTTNPLPPETEQLLAKLNPIQLAWLSGYAWAKAQGEDAGTNVTNKNAASTLVTEDKPLNVTVLSASQTGNANGVANQLAERLKAEGVNVTRKALKEYKAKTIGDEQFVLLVTSTQGEGEAPEEGVPLYKLLHGKKAPNLANLEFAVLGLGDTSYPNFCQAGKDFDKRFEELGAKRLLARADADLDFKSTADKWIQDVVEAVKAKSAVSASVVASVVSASSAQSAVNYSKENPYTAKLITNQKITARDSAKDVRHFEFDLSGSGLQYKAGDALGVWAENDPDLINEVLGLLKIQPDESVQLNGKSLDIHGALLSRLELTQNTPAFVKGYAQLANNKKLTALVSSDKKLADYVNDTPIVDVLHDFPAKISAQQFADLLRPLTPRLYSISSSPEEVGEEVHLSVGVVRFEHEGRARTGVASGFLADRVEEDGEVKIFVEPNDNFRLPQDKSKPIIMIGSGTGIAPFRAFLQQRQAEEAEGKNWLIFGNQHFATDFLYQAEWQQFVKDGYLHKYDFAWSRDQAEKIYVQDKIREKSTALWQWLQEGAHVYVCGDASKMAKDVENALLEVIAREGKLTPEDAEEYLNDLREDKRYQRDVY.

In terms of domain architecture, Flavodoxin-like spans 62–200 (VTVLSASQTG…TADKWIQDVV (139 aa)). Residues 68–73 (SQTGNA), 115–118 (STQG), and 151–160 (LGDTSYPNFC) contribute to the FMN site. The FAD-binding FR-type domain occupies 232-446 (ENPYTAKLIT…VEPNDNFRLP (215 aa)). FAD is bound by residues threonine 320, asparagine 354, 384–387 (RLYS), 402–404 (SVG), and 417–420 (GVAS). NADP(+)-binding positions include 517–518 (SR), 523–527 (KIYVQ), and aspartate 559. FAD is bound at residue tyrosine 597.

This sequence belongs to the NADPH-dependent sulphite reductase flavoprotein subunit CysJ family. The protein in the N-terminal section; belongs to the flavodoxin family. It in the C-terminal section; belongs to the flavoprotein pyridine nucleotide cytochrome reductase family. Alpha(8)-beta(8). The alpha component is a flavoprotein, the beta component is a hemoprotein. FAD serves as cofactor. FMN is required as a cofactor.

It catalyses the reaction hydrogen sulfide + 3 NADP(+) + 3 H2O = sulfite + 3 NADPH + 4 H(+). It participates in sulfur metabolism; hydrogen sulfide biosynthesis; hydrogen sulfide from sulfite (NADPH route): step 1/1. Functionally, component of the sulfite reductase complex that catalyzes the 6-electron reduction of sulfite to sulfide. This is one of several activities required for the biosynthesis of L-cysteine from sulfate. The flavoprotein component catalyzes the electron flow from NADPH -&gt; FAD -&gt; FMN to the hemoprotein component. The chain is Sulfite reductase [NADPH] flavoprotein alpha-component from Mannheimia succiniciproducens (strain KCTC 0769BP / MBEL55E).